A 428-amino-acid chain; its full sequence is Serine--tRNA ligase (428 aa).

231–233 provides a ligand contact to L-serine; it reads TAE. ATP is bound at residue 262–264; it reads RSE. Glu-285 contributes to the L-serine binding site. 349 to 352 provides a ligand contact to ATP; sequence EISS. Residue Ser-385 participates in L-serine binding.

This sequence belongs to the class-II aminoacyl-tRNA synthetase family. Type-1 seryl-tRNA synthetase subfamily. Homodimer. The tRNA molecule binds across the dimer.

The protein localises to the cytoplasm. It carries out the reaction tRNA(Ser) + L-serine + ATP = L-seryl-tRNA(Ser) + AMP + diphosphate + H(+). It catalyses the reaction tRNA(Sec) + L-serine + ATP = L-seryl-tRNA(Sec) + AMP + diphosphate + H(+). It functions in the pathway aminoacyl-tRNA biosynthesis; selenocysteinyl-tRNA(Sec) biosynthesis; L-seryl-tRNA(Sec) from L-serine and tRNA(Sec): step 1/1. Functionally, catalyzes the attachment of serine to tRNA(Ser). Is also able to aminoacylate tRNA(Sec) with serine, to form the misacylated tRNA L-seryl-tRNA(Sec), which will be further converted into selenocysteinyl-tRNA(Sec). The polypeptide is Serine--tRNA ligase (Staphylococcus aureus (strain MSSA476)).